The primary structure comprises 197 residues: Small ribosomal subunit protein uS11m (197 aa).

The span at 43–52 (AAKEEVEKAE) shows a compositional bias: basic and acidic residues. Positions 43–66 (AAKEEVEKAETPAPAPSRSSFSIY) are disordered.

It belongs to the universal ribosomal protein uS11 family. Component of the mitochondrial ribosome small subunit (28S) which comprises a 12S rRNA and about 30 distinct proteins.

It is found in the mitochondrion. The sequence is that of Small ribosomal subunit protein uS11m (MRPS11) from Bos taurus (Bovine).